We begin with the raw amino-acid sequence, 73 residues long: Translation initiation factor IF-1 (73 aa).

The S1-like domain occupies 1–73 (MSEKEAGIEV…SRGRITYRDK (73 aa)).

This sequence belongs to the IF-1 family. Component of the 30S ribosomal translation pre-initiation complex which assembles on the 30S ribosome in the order IF-2 and IF-3, IF-1 and N-formylmethionyl-tRNA(fMet); mRNA recruitment can occur at any time during PIC assembly.

The protein localises to the cytoplasm. In terms of biological role, one of the essential components for the initiation of protein synthesis. Stabilizes the binding of IF-2 and IF-3 on the 30S subunit to which N-formylmethionyl-tRNA(fMet) subsequently binds. Helps modulate mRNA selection, yielding the 30S pre-initiation complex (PIC). Upon addition of the 50S ribosomal subunit IF-1, IF-2 and IF-3 are released leaving the mature 70S translation initiation complex. The polypeptide is Translation initiation factor IF-1 (Anaeromyxobacter dehalogenans (strain 2CP-C)).